A 101-amino-acid chain; its full sequence is Small ribosomal subunit protein uS14 (101 aa).

The protein belongs to the universal ribosomal protein uS14 family. In terms of assembly, part of the 30S ribosomal subunit. Contacts proteins S3 and S10.

Functionally, binds 16S rRNA, required for the assembly of 30S particles and may also be responsible for determining the conformation of the 16S rRNA at the A site. This chain is Small ribosomal subunit protein uS14, found in Opitutus terrae (strain DSM 11246 / JCM 15787 / PB90-1).